We begin with the raw amino-acid sequence, 662 residues long: UvrABC system protein B (662 aa).

In terms of domain architecture, Helicase ATP-binding spans 25-411 (DGIIAGDKFQ…STRIVEQVIR (387 aa)). 38–45 (GVTGSGKT) serves as a coordination point for ATP. Positions 91-114 (YYDYYQPEAYVPARDLYIEKDASI) match the Beta-hairpin motif. Residues 428–594 (QMEHIYGEVK…TIKKAIEDIL (167 aa)) form the Helicase C-terminal domain. The UVR domain maps to 625–660 (KKLIKKLEAQMAEYADMLMFEEAAVIRDKIEEVKRI).

It belongs to the UvrB family. In terms of assembly, forms a heterotetramer with UvrA during the search for lesions. Interacts with UvrC in an incision complex.

The protein localises to the cytoplasm. In terms of biological role, the UvrABC repair system catalyzes the recognition and processing of DNA lesions. A damage recognition complex composed of 2 UvrA and 2 UvrB subunits scans DNA for abnormalities. Upon binding of the UvrA(2)B(2) complex to a putative damaged site, the DNA wraps around one UvrB monomer. DNA wrap is dependent on ATP binding by UvrB and probably causes local melting of the DNA helix, facilitating insertion of UvrB beta-hairpin between the DNA strands. Then UvrB probes one DNA strand for the presence of a lesion. If a lesion is found the UvrA subunits dissociate and the UvrB-DNA preincision complex is formed. This complex is subsequently bound by UvrC and the second UvrB is released. If no lesion is found, the DNA wraps around the other UvrB subunit that will check the other stand for damage. The protein is UvrABC system protein B of Treponema denticola (strain ATCC 35405 / DSM 14222 / CIP 103919 / JCM 8153 / KCTC 15104).